A 1713-amino-acid polypeptide reads, in one-letter code: Serine/threonine-protein kinase MRCK beta (1713 aa).

The Protein kinase domain maps to 76-342 (FEIIKVIGRG…IEDFKKHAFF (267 aa)). Residues 82–90 (IGRGAFGEV) and lysine 105 contribute to the ATP site. Catalysis depends on aspartate 200, which acts as the Proton acceptor. Phosphoserine; by autocatalysis occurs at positions 221 and 233. Position 239 is a phosphothreonine; by autocatalysis (threonine 239). Positions 343–413 (EGLNWENIRN…TTESCFSDRG (71 aa)) constitute an AGC-kinase C-terminal domain. Threonine 423 is modified (phosphothreonine). Positions 434–649 (LENSLQIEAY…ASKERKLREH (216 aa)) form a coiled coil. The interval 461–485 (LQESTQTVQSLHGSTRALGNSNRDK) is disordered. Over residues 463 to 481 (ESTQTVQSLHGSTRALGNS) the composition is skewed to polar residues. Arginine 671 is subject to Omega-N-methylarginine. Coiled-coil stretches lie at residues 681-815 (QEIS…AHWE) and 882-939 (ALEA…FRAD). The residue at position 927 (serine 927) is a Phosphoserine. Tyrosine 954 is subject to Phosphotyrosine. 2 stretches are compositionally biased toward polar residues: residues 971 to 994 (ASDQ…TSTE) and 1001 to 1014 (RSQQ…LPNT). The interval 971–1014 (ASDQETQASKLDLSPSVSVATSTEQQEDAARSQQRPSTVPLPNT) is disordered. The Phorbol-ester/DAG-type zinc-finger motif lies at 1026–1076 (AHQFSIKSFPSPTQCSHCTSLMVGLIRQGYACEVCAFSCHVSCKDSAPQVC). One can recognise a PH domain in the interval 1096–1215 (GTAYKGYVKV…WVGILEGLQA (120 aa)). Positions 1241 to 1515 (IKTVLAAAIV…RPLNSDGSLN (275 aa)) constitute a CNH domain. Residues 1585 to 1598 (ISNPTNFNHVAHMG) form the CRIB domain. The interval 1615 to 1713 (PTAQEEKQGP…EGLDQPACDA (99 aa)) is disordered. Residues 1666 to 1677 (DFDKEPDSDSTK) show a composition bias toward basic and acidic residues. Phosphoserine occurs at positions 1682, 1684, 1688, 1692, and 1695.

The protein belongs to the protein kinase superfamily. AGC Ser/Thr protein kinase family. DMPK subfamily. Homodimer and homotetramer via the coiled coil regions. Interacts tightly with GTP-bound but not GDP-bound CDC42. Interacts with TJP1; this interaction requires the presence of catalytically active CDC42. Forms a tripartite complex with MYO18A and LURAP1 with the latter acting as an adapter connecting CDC42BPB and MYO18A. LURAP1 binding results in activation of CDC42BPB by abolition of its negative autoregulation. Interacts with STRIP1, STRN3 and SIKE1. Interacts with CPNE4 (via VWFA domain). Interacts with LURAP1. Interacts (via AGC-kinase C-terminal domain) with FAM89B/LRAP25 (via LRR repeat). Forms a tripartite complex with FAM89B/LRAP25 and LIMK1. Requires Mg(2+) as cofactor. In terms of processing, proteolytically cleaved by caspases upon apoptosis induction. In terms of tissue distribution, expressed in all tissues examined with highest levels in lung and kidney.

It is found in the cytoplasm. The protein localises to the cell membrane. Its subcellular location is the cell junction. The protein resides in the cell projection. It localises to the lamellipodium. The catalysed reaction is L-seryl-[protein] + ATP = O-phospho-L-seryl-[protein] + ADP + H(+). It catalyses the reaction L-threonyl-[protein] + ATP = O-phospho-L-threonyl-[protein] + ADP + H(+). Maintained in an inactive, closed conformation by an interaction between the kinase domain and the negative autoregulatory C-terminal coiled-coil region. Agonist binding to the phorbol ester binding site disrupts this, releasing the kinase domain to allow N-terminus-mediated dimerization and kinase activation by transautophosphorylation. Inhibited by chelerythrine chloride. In terms of biological role, serine/threonine-protein kinase which is an important downstream effector of CDC42 and plays a role in the regulation of cytoskeleton reorganization and cell migration. Regulates actin cytoskeletal reorganization via phosphorylation of PPP1R12C and MYL9/MLC2. In concert with MYO18A and LURAP1, is involved in modulating lamellar actomyosin retrograde flow that is crucial to cell protrusion and migration. Phosphorylates PPP1R12A. In concert with FAM89B/LRAP25 mediates the targeting of LIMK1 to the lamellipodium resulting in its activation and subsequent phosphorylation of CFL1 which is important for lamellipodial F-actin regulation. The sequence is that of Serine/threonine-protein kinase MRCK beta from Rattus norvegicus (Rat).